The primary structure comprises 263 residues: Proteasome subunit beta type-5 (263 aa).

A propeptide spans 1-59 (removed in mature form); that stretch reads MALASVLERPLSVNRRGFFGLGGRADLLDLGPGSPSDGLSLAAPSWGVPEEPRIEILHG. The active-site Nucleophile is the Thr-60. Ala-108 is a bortezomib binding site.

It belongs to the peptidase T1B family. As to quaternary structure, the 26S proteasome consists of a 20S proteasome core and two 19S regulatory subunits. The 20S proteasome core is a barrel-shaped complex made of 28 subunits that are arranged in four stacked rings. The two outer rings are each formed by seven alpha subunits, and the two inner rings are formed by seven beta subunits. The proteolytic activity is exerted by three beta-subunits PSMB5, PSMB6 and PSMB7. Directly interacts with POMP. Interacts with ABCB1 and TAP1.

The protein resides in the cytoplasm. It localises to the nucleus. The enzyme catalyses Cleavage of peptide bonds with very broad specificity.. In terms of biological role, component of the 20S core proteasome complex involved in the proteolytic degradation of most intracellular proteins. This complex plays numerous essential roles within the cell by associating with different regulatory particles. Associated with two 19S regulatory particles, forms the 26S proteasome and thus participates in the ATP-dependent degradation of ubiquitinated proteins. The 26S proteasome plays a key role in the maintenance of protein homeostasis by removing misfolded or damaged proteins that could impair cellular functions, and by removing proteins whose functions are no longer required. Associated with the PA200 or PA28, the 20S proteasome mediates ubiquitin-independent protein degradation. This type of proteolysis is required in several pathways including spermatogenesis (20S-PA200 complex) or generation of a subset of MHC class I-presented antigenic peptides (20S-PA28 complex). Within the 20S core complex, PSMB5 displays a chymotrypsin-like activity. The chain is Proteasome subunit beta type-5 from Bos taurus (Bovine).